The chain runs to 206 residues: 2-phospho-L-lactate guanylyltransferase (206 aa).

It belongs to the CofC family. As to quaternary structure, homodimer.

The enzyme catalyses (2S)-2-phospholactate + GTP + H(+) = (2S)-lactyl-2-diphospho-5'-guanosine + diphosphate. It participates in cofactor biosynthesis; coenzyme F420 biosynthesis. Its function is as follows. Guanylyltransferase that catalyzes the activation of (2S)-2-phospholactate (2-PL) as (2S)-lactyl-2-diphospho-5'-guanosine, via the condensation of 2-PL with GTP. It is involved in the biosynthesis of coenzyme F420, a hydride carrier cofactor. The sequence is that of 2-phospho-L-lactate guanylyltransferase from Archaeoglobus profundus (strain DSM 5631 / JCM 9629 / NBRC 100127 / Av18).